The sequence spans 255 residues: Electron transfer flavoprotein subunit beta (255 aa).

Ala2 carries the post-translational modification N-acetylalanine. Residues Ala9, 39–42 (NPFC), Cys66, and 123–134 (GKQAIDDDCNQT) contribute to the AMP site. The interval 183 to 205 (ADLRLNEPRYATLPNIMKAKKKK) is recognition loop. Lys200 bears the N6,N6,N6-trimethyllysine; by ETFBKMT; alternate mark. The residue at position 200 (Lys200) is an N6-acetyllysine; alternate. N6-methyllysine; alternate is present on Lys200. Lys203 is modified (N6,N6,N6-trimethyllysine; by ETFBKMT). Position 210 is an N6-acetyllysine; alternate (Lys210). Residue Lys210 is modified to N6-succinyllysine; alternate. 2 positions are modified to phosphoserine: Ser223 and Ser226. Lys238 is modified (N6-acetyllysine). At Lys248 the chain carries N6-acetyllysine; alternate. The residue at position 248 (Lys248) is an N6-succinyllysine; alternate.

Belongs to the ETF beta-subunit/FixA family. In terms of assembly, heterodimer composed of ETFA and ETFB. Identified in a complex that contains ETFA, ETFB and ETFRF1. Interacts with ACADM. Post-translationally, methylated. Trimethylation at Lys-200 and Lys-203 may negatively regulate the activity in electron transfer from acyl-CoA dehydrogenases.

The protein resides in the mitochondrion matrix. Its function is as follows. Heterodimeric electron transfer flavoprotein that accepts electrons from several mitochondrial dehydrogenases, including acyl-CoA dehydrogenases, glutaryl-CoA and sarcosine dehydrogenase. It transfers the electrons to the main mitochondrial respiratory chain via ETF-ubiquinone oxidoreductase. Required for normal mitochondrial fatty acid oxidation and normal amino acid metabolism. ETFB binds an AMP molecule that probably has a purely structural role. This Pongo abelii (Sumatran orangutan) protein is Electron transfer flavoprotein subunit beta.